A 459-amino-acid chain; its full sequence is MSLWGGRFLDESNETFKKFNASLPFDYILVKEDIFASIAWSKSLVEVGVLTQEEQKKIESALISLKEEIYNNSKKILESDYEDIHSWIEANLIKKIGELGKKLHTGRSRNDQITTDLKLWCKRKIFVLLDSIINLQKNFIFVAELNDDVIMPGYTHLQRAQPITFSYWCLAYVQMFKRDVSRLKDILKRLDISPLGSGALSGTAWNINRKKLAISMGFSSETNNALDSVSDRDYLIELLSASSISMTHLSRFSEDLIFFNSSEANFIELSDSITSGSSLMPQKKNPDALELIRAKCGRVHGALVSILVVLKSLPLSYNKDLQEDKEGLFDSLKTWNDSLLIASLVLKNIKLNRLSCRKAAEKGYSNATEIADYLVKKGMTFREAHHVSGKLVLRAIKENKSLNDLDLSIFQSYSALITDDIYKNITLEACLEKRSSKGGVAPNEIRKEIFKEKERLNIL.

This sequence belongs to the lyase 1 family. Argininosuccinate lyase subfamily.

Its subcellular location is the cytoplasm. The enzyme catalyses 2-(N(omega)-L-arginino)succinate = fumarate + L-arginine. Its pathway is amino-acid biosynthesis; L-arginine biosynthesis; L-arginine from L-ornithine and carbamoyl phosphate: step 3/3. The chain is Argininosuccinate lyase from Buchnera aphidicola subsp. Schizaphis graminum (strain Sg).